A 322-amino-acid chain; its full sequence is TATA box-binding protein-associated factor RNA polymerase I subunit D (322 aa).

Disordered regions lie at residues 1–70 (MAQS…SIEP) and 82–116 (FKKKKRKKRKKRKYEPKLRPRGRPRGKPSGTRITR). A Phosphoserine modification is found at serine 23. Residues 82 to 107 (FKKKKRKKRKKRKYEPKLRPRGRPRG) show a composition bias toward basic residues. Serine 137 is modified (phosphoserine). The tract at residues 198–219 (YMDDDGSLSPIEEPLTEDEATN) is disordered. A Phosphoserine modification is found at serine 232. The span at 257–267 (FSKKAKDATHR) shows a compositional bias: basic and acidic residues. Positions 257–276 (FSKKAKDATHREKGHRRTLK) are disordered.

In terms of assembly, component of the transcription factor SL1/TIF-IB complex, composed of TBP and at least TAF1A, TAF1B, TAF1C and TAF1D. Interacts with UBTF.

The protein localises to the nucleus. Functionally, component of the transcription factor SL1/TIF-IB complex, which is involved in the assembly of the PIC (preinitiation complex) during RNA polymerase I-dependent transcription. The rate of PIC formation probably is primarily dependent on the rate of association of SL1/TIF-IB with the rDNA promoter. SL1/TIF-IB is involved in stabilization of nucleolar transcription factor 1/UBTF on rDNA. Formation of SL1/TIF-IB excludes the association of TBP with TFIID subunits. This chain is TATA box-binding protein-associated factor RNA polymerase I subunit D (Taf1d), found in Mus musculus (Mouse).